The following is an 87-amino-acid chain: U3-theraphotoxin-Hhn1a 3 (87 aa).

The N-terminal stretch at 1–24 is a signal peptide; sequence MVNMKASMFLTFAGLVLLFVVCYA. Residues 25 to 52 constitute a propeptide that is removed on maturation; that stretch reads PESEEKEFPKEMLSSIFAVDNDFKQEER. 3 disulfide bridges follow: cysteine 54–cysteine 67, cysteine 61–cysteine 72, and cysteine 66–cysteine 79.

Belongs to the neurotoxin 10 (Hwtx-1) family. 51 (Hntx-8) subfamily. Hntx-8 sub-subfamily. As to expression, expressed by the venom gland.

The protein resides in the secreted. Its function is as follows. Ion channel inhibitor. The sequence is that of U3-theraphotoxin-Hhn1a 3 from Cyriopagopus hainanus (Chinese bird spider).